A 93-amino-acid chain; its full sequence is Small ribosomal subunit protein uS19 (93 aa).

A disordered region spans residues 73–93 (EFSPTRTYRGHDKKDKKIQKK).

Belongs to the universal ribosomal protein uS19 family.

Functionally, protein S19 forms a complex with S13 that binds strongly to the 16S ribosomal RNA. The protein is Small ribosomal subunit protein uS19 of Phytoplasma mali (strain AT).